Here is a 77-residue protein sequence, read N- to C-terminus: Translation initiation factor IF-1, chloroplastic (77 aa).

The S1-like domain occupies 1-71 (MKEQKLIHEG…TKGRIIYRLR (71 aa)).

This sequence belongs to the IF-1 family. Component of the 30S ribosomal translation pre-initiation complex which assembles on the 30S ribosome in the order IF-2 and IF-3, IF-1 and N-formylmethionyl-tRNA(fMet); mRNA recruitment can occur at any time during PIC assembly.

Its subcellular location is the plastid. It is found in the chloroplast. One of the essential components for the initiation of protein synthesis. Stabilizes the binding of IF-2 and IF-3 on the 30S subunit to which N-formylmethionyl-tRNA(fMet) subsequently binds. Helps modulate mRNA selection, yielding the 30S pre-initiation complex (PIC). Upon addition of the 50S ribosomal subunit IF-1, IF-2 and IF-3 are released leaving the mature 70S translation initiation complex. This chain is Translation initiation factor IF-1, chloroplastic, found in Dioscorea elephantipes (Elephant's foot yam).